Here is a 218-residue protein sequence, read N- to C-terminus: Trichothecene biosynthesis transcription regulator TRI6 (218 aa).

A disordered region spans residues Ser154 to His181. Residues Asp162 to Arg176 are compositionally biased toward basic and acidic residues. Residues Ile185–His215 form a C2H2-type zinc finger.

It localises to the nucleus. Transcriptional activator of part of the trichothecene biosynthesis cluster that mediates the production of the antimicrobial trichothecene harzianum A (HA) that plays a role in Botrytis cinerea antagonistic activity and plant defense priming. Regulates expression of both trichothecene and mevalonate pathway genes. This is Trichothecene biosynthesis transcription regulator TRI6 from Trichoderma arundinaceum.